Reading from the N-terminus, the 520-residue chain is GMP synthase [glutamine-hydrolyzing] (520 aa).

The Glutamine amidotransferase type-1 domain occupies 13–205 (KIIVLDYGSQ…ALNICKAKGD (193 aa)). Cysteine 90 (nucleophile) is an active-site residue. Catalysis depends on residues histidine 179 and glutamate 181. Residues 206-395 (WSMDNFIDMQ…LGMPDHIVWR (190 aa)) enclose the GMPS ATP-PPase domain. ATP is bound at residue 233–239 (SGGVDSS).

As to quaternary structure, homodimer.

It catalyses the reaction XMP + L-glutamine + ATP + H2O = GMP + L-glutamate + AMP + diphosphate + 2 H(+). Its pathway is purine metabolism; GMP biosynthesis; GMP from XMP (L-Gln route): step 1/1. Its function is as follows. Catalyzes the synthesis of GMP from XMP. The protein is GMP synthase [glutamine-hydrolyzing] of Streptococcus pneumoniae (strain ATCC 700669 / Spain 23F-1).